Consider the following 80-residue polypeptide: Protein FAM229B (80 aa).

Positions 1–45 (MPFRFGTQPRRFPVEGGDSSIELESGLSSSASCTGKETSPNRQLR) are disordered. Over residues 15 to 32 (EGGDSSIELESGLSSSAS) the composition is skewed to low complexity. The span at 33–42 (CTGKETSPNR) shows a compositional bias: polar residues.

Belongs to the FAM229 family.

The polypeptide is Protein FAM229B (Fam229b) (Mus musculus (Mouse)).